Reading from the N-terminus, the 433-residue chain is Serine--tRNA ligase (433 aa).

Residue 235–237 (TSE) coordinates L-serine. 266–268 (RSE) contacts ATP. Glu289 is a binding site for L-serine. 353–356 (EISS) is an ATP binding site. Residue Ser388 coordinates L-serine.

This sequence belongs to the class-II aminoacyl-tRNA synthetase family. Type-1 seryl-tRNA synthetase subfamily. As to quaternary structure, homodimer. The tRNA molecule binds across the dimer.

It localises to the cytoplasm. It carries out the reaction tRNA(Ser) + L-serine + ATP = L-seryl-tRNA(Ser) + AMP + diphosphate + H(+). It catalyses the reaction tRNA(Sec) + L-serine + ATP = L-seryl-tRNA(Sec) + AMP + diphosphate + H(+). It functions in the pathway aminoacyl-tRNA biosynthesis; selenocysteinyl-tRNA(Sec) biosynthesis; L-seryl-tRNA(Sec) from L-serine and tRNA(Sec): step 1/1. Its function is as follows. Catalyzes the attachment of serine to tRNA(Ser). Is also able to aminoacylate tRNA(Sec) with serine, to form the misacylated tRNA L-seryl-tRNA(Sec), which will be further converted into selenocysteinyl-tRNA(Sec). The sequence is that of Serine--tRNA ligase from Burkholderia vietnamiensis (strain G4 / LMG 22486) (Burkholderia cepacia (strain R1808)).